The primary structure comprises 109 residues: Ig kappa chain V region K16-167 (109 aa).

The segment at 1–23 is framework-1; sequence ALVMTQTPSPVSAAVGGTVTISC. The complementarity-determining-1 stretch occupies residues 24-35; it reads QASQSVYSNNLS. A framework-2 region spans residues 36-50; that stretch reads WFQQKPGQPPKLLIY. The tract at residues 51–57 is complementarity-determining-2; sequence KASTLAS. The framework-3 stretch occupies residues 58-89; it reads GVPSRFKGSGSGTQFTLPISGVECDDAATYYC. Residues 90–99 are complementarity-determining-3; it reads QGTNTGNNIV. Positions 100 to 109 are framework-4; the sequence is FGTGTEVVVK.

The sequence is that of Ig kappa chain V region K16-167 from Oryctolagus cuniculus (Rabbit).